We begin with the raw amino-acid sequence, 130 residues long: Small ribosomal subunit protein uS9 (130 aa).

The protein belongs to the universal ribosomal protein uS9 family.

The sequence is that of Small ribosomal subunit protein uS9 from Exiguobacterium sibiricum (strain DSM 17290 / CCUG 55495 / CIP 109462 / JCM 13490 / 255-15).